The primary structure comprises 889 residues: Putative receptor-like protein kinase At3g46340 (889 aa).

The N-terminal stretch at 1 to 25 (MEFPHSVLLVVLIIATFAISNLVQA) is a signal peptide. Residues 26 to 514 (EEDQEGFISL…VITKKKFPVM (489 aa)) lie on the Extracellular side of the membrane. 12 N-linked (GlcNAc...) asparagine glycosylation sites follow: N185, N239, N259, N292, N316, N342, N366, N419, N435, N448, N467, and N474. LRR repeat units follow at residues 414–437 (RITSLNLSSTGLTGNIAAGIQNLT), 438–460 (HLDKLDLSNNNLTGGVPEFLASM), and 462–483 (SLSFINLSKNNLNGSIPQALLK). A helical membrane pass occupies residues 515 to 535 (IVALVSSAVVVILVVLVLIFV). The Cytoplasmic segment spans residues 536-889 (FKKKKPSNLE…FDTKAVPSAR (354 aa)). Residues 544–566 (LEDLPPSSNTPRENITSTSISDT) are disordered. Residues 585-874 (KNLQRPLGEG…TQGMDSHSSF (290 aa)) form the Protein kinase domain. ATP-binding positions include 591–599 (LGEGGFGVV) and K614. The residue at position 659 (Y659) is a Phosphotyrosine. D711 functions as the Proton acceptor in the catalytic mechanism. Position 745 is a phosphoserine (S745). Phosphothreonine occurs at positions 746 and 751. Y759 is subject to Phosphotyrosine. The tract at residues 863–889 (NKTQGMDSHSSFEQSMSFDTKAVPSAR) is disordered. Polar residues predominate over residues 864–880 (KTQGMDSHSSFEQSMSF).

Belongs to the protein kinase superfamily. Ser/Thr protein kinase family.

The protein resides in the cell membrane. It carries out the reaction L-seryl-[protein] + ATP = O-phospho-L-seryl-[protein] + ADP + H(+). The catalysed reaction is L-threonyl-[protein] + ATP = O-phospho-L-threonyl-[protein] + ADP + H(+). This is Putative receptor-like protein kinase At3g46340 from Arabidopsis thaliana (Mouse-ear cress).